The following is a 262-amino-acid chain: Flap endonuclease Xni (262 aa).

Asp-105 serves as a coordination point for Mg(2+). The region spanning 164–251 is the 5'-3' exonuclease domain; that stretch reads SQFLDLMALA…NINLKDFRAN (88 aa). 5 residues coordinate K(+): Leu-172, Ala-173, Pro-181, Ile-183, and Ile-186. The tract at residues 185-190 is interaction with DNA; the sequence is GIGPKS.

The protein belongs to the Xni family. Requires Mg(2+) as cofactor. It depends on K(+) as a cofactor.

Has flap endonuclease activity. During DNA replication, flap endonucleases cleave the 5'-overhanging flap structure that is generated by displacement synthesis when DNA polymerase encounters the 5'-end of a downstream Okazaki fragment. This chain is Flap endonuclease Xni, found in Shewanella sp. (strain W3-18-1).